Consider the following 61-residue polypeptide: Tryptophyllin-T1 (61 aa).

A signal peptide spans 1 to 22; it reads MDFLKKSLFLVLFLGLVSISLC. Positions 23-53 are excised as a propeptide; it reads DEEKRQDDDEASEREEKKEIHEEGNQEERRD. Residues 25–61 are disordered; it reads EKRQDDDEASEREEKKEIHEEGNQEERRDRPPSWIPK. Basic and acidic residues predominate over residues 36–55; sequence REEKKEIHEEGNQEERRDRP. Position 56 is a 4-hydroxyproline; partial (proline 56).

It belongs to the frog skin active peptide (FSAP) family. Tryptophillin subfamily. As to expression, expressed by the skin glands.

The protein resides in the secreted. The protein is Tryptophyllin-T1 of Pithecopus azureus (Orange-legged monkey tree frog).